The sequence spans 480 residues: Aspartyl/glutamyl-tRNA(Asn/Gln) amidotransferase subunit B (480 aa).

The protein belongs to the GatB/GatE family. GatB subfamily. As to quaternary structure, heterotrimer of A, B and C subunits.

It carries out the reaction L-glutamyl-tRNA(Gln) + L-glutamine + ATP + H2O = L-glutaminyl-tRNA(Gln) + L-glutamate + ADP + phosphate + H(+). The catalysed reaction is L-aspartyl-tRNA(Asn) + L-glutamine + ATP + H2O = L-asparaginyl-tRNA(Asn) + L-glutamate + ADP + phosphate + 2 H(+). Allows the formation of correctly charged Asn-tRNA(Asn) or Gln-tRNA(Gln) through the transamidation of misacylated Asp-tRNA(Asn) or Glu-tRNA(Gln) in organisms which lack either or both of asparaginyl-tRNA or glutaminyl-tRNA synthetases. The reaction takes place in the presence of glutamine and ATP through an activated phospho-Asp-tRNA(Asn) or phospho-Glu-tRNA(Gln). The chain is Aspartyl/glutamyl-tRNA(Asn/Gln) amidotransferase subunit B from Streptococcus pneumoniae (strain P1031).